The following is a 531-amino-acid chain: Putative cysteine ligase BshC (531 aa).

A coiled-coil region spans residues lysine 447 to glutamate 481.

It belongs to the BshC family.

The chain is Putative cysteine ligase BshC from Flavobacterium psychrophilum (strain ATCC 49511 / DSM 21280 / CIP 103535 / JIP02/86).